The following is a 292-amino-acid chain: Phosphatidylglycerol--prolipoprotein diacylglyceryl transferase (292 aa).

Helical transmembrane passes span 24–44 (ISVHWYGIMYVSAMLIALLIA), 65–85 (FFIWVEIGVILGGRIGYVLIY), 110–130 (GISGFSYHGAMAGFVLAAIIF), and 136–156 (QSFWIFMDLSAISIPLGYVFG). Arg157 provides a ligand contact to a 1,2-diacyl-sn-glycero-3-phospho-(1'-sn-glycerol). Helical transmembrane passes span 192-212 (SQLFEAFAEGIIVFILLICLL), 219-239 (GTLLVAYGVFYALARFVCEYF), and 256-276 (GQILSLVMLVISIFLGLFVFV).

Belongs to the Lgt family.

The protein resides in the cell inner membrane. It carries out the reaction L-cysteinyl-[prolipoprotein] + a 1,2-diacyl-sn-glycero-3-phospho-(1'-sn-glycerol) = an S-1,2-diacyl-sn-glyceryl-L-cysteinyl-[prolipoprotein] + sn-glycerol 1-phosphate + H(+). It functions in the pathway protein modification; lipoprotein biosynthesis (diacylglyceryl transfer). Functionally, catalyzes the transfer of the diacylglyceryl group from phosphatidylglycerol to the sulfhydryl group of the N-terminal cysteine of a prolipoprotein, the first step in the formation of mature lipoproteins. The protein is Phosphatidylglycerol--prolipoprotein diacylglyceryl transferase of Helicobacter hepaticus (strain ATCC 51449 / 3B1).